The primary structure comprises 141 residues: Organic hydroperoxide resistance protein OhrA (141 aa).

It belongs to the OsmC/Ohr family.

Functionally, involved in organic hydroperoxide resistance. This chain is Organic hydroperoxide resistance protein OhrA (ohrA), found in Bacillus subtilis (strain 168).